A 268-amino-acid polypeptide reads, in one-letter code: tRNA (guanine-N(1)-)-methyltransferase (268 aa).

S-adenosyl-L-methionine contacts are provided by residues G110 and I129–M134. Residues W246–S268 form a disordered region.

Belongs to the RNA methyltransferase TrmD family. In terms of assembly, homodimer.

It is found in the cytoplasm. It carries out the reaction guanosine(37) in tRNA + S-adenosyl-L-methionine = N(1)-methylguanosine(37) in tRNA + S-adenosyl-L-homocysteine + H(+). Specifically methylates guanosine-37 in various tRNAs. The protein is tRNA (guanine-N(1)-)-methyltransferase of Deinococcus deserti (strain DSM 17065 / CIP 109153 / LMG 22923 / VCD115).